Consider the following 337-residue polypeptide: Glyceraldehyde-3-phosphate dehydrogenase 2, cytosolic (337 aa).

Residues 1 to 151 are binding to NAD; it reads MGKIKIGING…YTSDVNIVSN (151 aa). NAD(+) contacts are provided by residues 13–14, Asp-35, and Arg-82; that span reads RI. The interval 152 to 337 is catalytic; that stretch reads ASCTTNCLAP…DLIRHMFKTQ (186 aa). Residues 153–155, Thr-184, 213–214, and Arg-236 contribute to the D-glyceraldehyde 3-phosphate site; these read SCT and TG. The active-site Nucleophile is Cys-154. Residue Asn-318 participates in NAD(+) binding.

It belongs to the glyceraldehyde-3-phosphate dehydrogenase family. Homotetramer. Developing seeds, seedling roots and shoots, and embryo.

The protein localises to the cytoplasm. The enzyme catalyses D-glyceraldehyde 3-phosphate + phosphate + NAD(+) = (2R)-3-phospho-glyceroyl phosphate + NADH + H(+). Its pathway is carbohydrate degradation; glycolysis; pyruvate from D-glyceraldehyde 3-phosphate: step 1/5. In terms of biological role, key enzyme in glycolysis that catalyzes the first step of the pathway by converting D-glyceraldehyde 3-phosphate (G3P) into 3-phospho-D-glyceroyl phosphate. Essential for the maintenance of cellular ATP levels and carbohydrate metabolism. The polypeptide is Glyceraldehyde-3-phosphate dehydrogenase 2, cytosolic (GAPC2) (Zea mays (Maize)).